Here is a 255-residue protein sequence, read N- to C-terminus: MRILCTNDDGVHAPGLKIVEEIARALSDDVWVVAPELDQSGVSHSLSLNDPLRLREIGPRHFAVRGTPTDCVIMGARHILGDKGPDLVLSGVNKGRNVAEDVVYSGTIAGALEGTILGIPSFALSQEYSHDSRSAPLWETALAHGPKILRKALDAGVPKNTVINVNFPACAPEEVAGVLVTRQGKRNQGFLRVDERRDGRGNPYFWIGFERVVVVDTPAEGTDLAALAARYISVTPLKLDRTDEGFSEALRSTLA.

4 residues coordinate a divalent metal cation: Asp8, Asp9, Ser40, and Asn93.

This sequence belongs to the SurE nucleotidase family. The cofactor is a divalent metal cation.

The protein resides in the cytoplasm. The enzyme catalyses a ribonucleoside 5'-phosphate + H2O = a ribonucleoside + phosphate. Its function is as follows. Nucleotidase that shows phosphatase activity on nucleoside 5'-monophosphates. This Rhodopseudomonas palustris (strain BisA53) protein is 5'-nucleotidase SurE.